The chain runs to 338 residues: Ketol-acid reductoisomerase (NADP(+)) (338 aa).

One can recognise a KARI N-terminal Rossmann domain in the interval 1 to 181 (MKVYYDKDAD…GGGKAGIIET (181 aa)). Residues 24 to 27 (YGSQ), R47, and S52 contribute to the NADP(+) site. H107 is a catalytic residue. An NADP(+)-binding site is contributed by G133. In terms of domain architecture, KARI C-terminal knotted spans 182 to 327 (NFREETETDL…EKLRAMMPWI (146 aa)). Residues D190, E194, E226, and E230 each coordinate Mg(2+). Residue S251 coordinates substrate.

It belongs to the ketol-acid reductoisomerase family. Requires Mg(2+) as cofactor.

The enzyme catalyses (2R)-2,3-dihydroxy-3-methylbutanoate + NADP(+) = (2S)-2-acetolactate + NADPH + H(+). It carries out the reaction (2R,3R)-2,3-dihydroxy-3-methylpentanoate + NADP(+) = (S)-2-ethyl-2-hydroxy-3-oxobutanoate + NADPH + H(+). It participates in amino-acid biosynthesis; L-isoleucine biosynthesis; L-isoleucine from 2-oxobutanoate: step 2/4. The protein operates within amino-acid biosynthesis; L-valine biosynthesis; L-valine from pyruvate: step 2/4. In terms of biological role, involved in the biosynthesis of branched-chain amino acids (BCAA). Catalyzes an alkyl-migration followed by a ketol-acid reduction of (S)-2-acetolactate (S2AL) to yield (R)-2,3-dihydroxy-isovalerate. In the isomerase reaction, S2AL is rearranged via a Mg-dependent methyl migration to produce 3-hydroxy-3-methyl-2-ketobutyrate (HMKB). In the reductase reaction, this 2-ketoacid undergoes a metal-dependent reduction by NADPH to yield (R)-2,3-dihydroxy-isovalerate. This Methylibium petroleiphilum (strain ATCC BAA-1232 / LMG 22953 / PM1) protein is Ketol-acid reductoisomerase (NADP(+)).